Consider the following 119-residue polypeptide: Flagellar transcriptional regulator FlhD (119 aa).

Belongs to the FlhD family. As to quaternary structure, homodimer; disulfide-linked. Forms a heterohexamer composed of two FlhC and four FlhD subunits. Each FlhC binds a FlhD dimer, forming a heterotrimer, and a hexamer assembles by dimerization of two heterotrimers.

The protein resides in the cytoplasm. In terms of biological role, functions in complex with FlhC as a master transcriptional regulator that regulates transcription of several flagellar and non-flagellar operons by binding to their promoter region. Activates expression of class 2 flagellar genes, including fliA, which is a flagellum-specific sigma factor that turns on the class 3 genes. Also regulates genes whose products function in a variety of physiological pathways. The chain is Flagellar transcriptional regulator FlhD from Shigella boydii serotype 4 (strain Sb227).